A 146-amino-acid chain; its full sequence is Linear conopeptide (146 aa).

The first 19 residues, 1–19 (MLRLIIAAAVLVSACLAYP), serve as a signal peptide directing secretion. A propeptide spanning residues 20–34 (QRREGAPADAANLQS) is cleaved from the precursor. The residue at position 40 (methionine 40) is a Methionine sulfoxide; partial; in Cn2. Propeptides lie at residues 58 to 80 (FLPF…LEKR) and 104 to 146 (FLHN…DKEQ). The interval 107 to 146 (NEKGDKHPFANVDSADTDLGQFEPSAENKNGEFRFFDKEQ) is disordered. The segment covering 135-146 (KNGEFRFFDKEQ) has biased composition (basic and acidic residues).

As to expression, expressed by the venom duct.

Its subcellular location is the secreted. In Conus consors (Singed cone), this protein is Linear conopeptide.